Here is a 454-residue protein sequence, read N- to C-terminus: Pup--protein ligase (454 aa).

A Mg(2+)-binding site is contributed by glutamate 9. ATP is bound at residue arginine 53. Tyrosine 55 provides a ligand contact to Mg(2+). Residue aspartate 57 is the Proton acceptor of the active site. Position 63 (glutamate 63) interacts with Mg(2+). Residues threonine 66 and tryptophan 420 each coordinate ATP.

The protein belongs to the Pup ligase/Pup deamidase family. Pup-conjugating enzyme subfamily.

The catalysed reaction is ATP + [prokaryotic ubiquitin-like protein]-L-glutamate + [protein]-L-lysine = ADP + phosphate + N(6)-([prokaryotic ubiquitin-like protein]-gamma-L-glutamyl)-[protein]-L-lysine.. The protein operates within protein degradation; proteasomal Pup-dependent pathway. Its pathway is protein modification; protein pupylation. Functionally, catalyzes the covalent attachment of the prokaryotic ubiquitin-like protein modifier Pup to the proteasomal substrate proteins, thereby targeting them for proteasomal degradation. This tagging system is termed pupylation. The ligation reaction involves the side-chain carboxylate of the C-terminal glutamate of Pup and the side-chain amino group of a substrate lysine. In Arthrobacter sp. (strain FB24), this protein is Pup--protein ligase.